Reading from the N-terminus, the 231-residue chain is ATP-dependent dethiobiotin synthetase BioD (231 aa).

Residue 12–17 (EVGKTV) coordinates ATP. Position 16 (threonine 16) interacts with Mg(2+). Lysine 37 is a catalytic residue. Serine 41 is a substrate binding site. ATP-binding positions include aspartate 51, 112 to 115 (EGAG), and 202 to 204 (PKL). Positions 51 and 112 each coordinate Mg(2+).

Belongs to the dethiobiotin synthetase family. Homodimer. Mg(2+) is required as a cofactor.

The protein resides in the cytoplasm. It carries out the reaction (7R,8S)-7,8-diammoniononanoate + CO2 + ATP = (4R,5S)-dethiobiotin + ADP + phosphate + 3 H(+). Its pathway is cofactor biosynthesis; biotin biosynthesis; biotin from 7,8-diaminononanoate: step 1/2. In terms of biological role, catalyzes a mechanistically unusual reaction, the ATP-dependent insertion of CO2 between the N7 and N8 nitrogen atoms of 7,8-diaminopelargonic acid (DAPA, also called 7,8-diammoniononanoate) to form a ureido ring. The polypeptide is ATP-dependent dethiobiotin synthetase BioD (Bacillus subtilis (strain 168)).